Reading from the N-terminus, the 142-residue chain is HTH-type transcriptional regulator MntR (142 aa).

The region spanning 1–63 is the HTH dtxR-type domain; sequence MPTPSMEDYI…YEKYRGLILT (63 aa). Residues D8, E11, H77, E99, E102, and H103 each contribute to the Mn(2+) site.

Belongs to the DtxR/MntR family. In terms of assembly, homodimer.

Its subcellular location is the cytoplasm. DNA binding is strongly activated by Mn(2+). In terms of biological role, central regulator of manganese homeostasis. The chain is HTH-type transcriptional regulator MntR from Listeria welshimeri serovar 6b (strain ATCC 35897 / DSM 20650 / CCUG 15529 / CIP 8149 / NCTC 11857 / SLCC 5334 / V8).